The primary structure comprises 674 residues: Inorganic pyrophosphatase TTM2 (674 aa).

The region spanning 248–410 (SPTYILKSRK…PRTYIEQIQL (163 aa)) is the CYTH domain. Disordered regions lie at residues 457 to 498 (KNLK…SPAN) and 619 to 640 (RSRL…SKSS). Residues 484-496 (SDRRYEERNHDSP) show a composition bias toward basic and acidic residues. The segment covering 623–640 (ARTGSSNSGNRGRSSKSS) has biased composition (low complexity). Residues 650–670 (LPLVLTVAICSIGIIVIKSYI) form a helical membrane-spanning segment.

Mg(2+) is required as a cofactor. As to expression, predominantly expressed in the shoot apices of inflorescences.

The protein localises to the mitochondrion outer membrane. The enzyme catalyses diphosphate + H2O = 2 phosphate + H(+). In terms of biological role, exhibits pyrophosphatase activity with stronger affinity for pyrophosphate (PPi), moderate affinity for ATP and ADP, and weak affinity for tripolyphosphate (PPPi). No activity observed toward uridine substrate. Negative regulator of the salicylic acid (SA)-mediated amplification of defense responses against both virulent and avirulent pathogens, including oomycetes (e.g. H.arabidopsidis) and bacteria (e.g. P.syringae). Represses systemic acquired resistance (SAR). The chain is Inorganic pyrophosphatase TTM2 from Arabidopsis thaliana (Mouse-ear cress).